The chain runs to 61 residues: Small ribosomal subunit protein uS14B (61 aa).

4 residues coordinate Zn(2+): Cys24, Cys27, Cys40, and Cys43.

This sequence belongs to the universal ribosomal protein uS14 family. Zinc-binding uS14 subfamily. As to quaternary structure, part of the 30S ribosomal subunit. Contacts proteins S3 and S10. The cofactor is Zn(2+).

Binds 16S rRNA, required for the assembly of 30S particles and may also be responsible for determining the conformation of the 16S rRNA at the A site. This Levilactobacillus brevis (strain ATCC 367 / BCRC 12310 / CIP 105137 / JCM 1170 / LMG 11437 / NCIMB 947 / NCTC 947) (Lactobacillus brevis) protein is Small ribosomal subunit protein uS14B.